The primary structure comprises 1450 residues: Inactive serine/threonine-protein kinase TEX14 (1450 aa).

3 ANK repeats span residues 27 to 54, 55 to 84, and 88 to 117; these read LHEY…AVNT, QGQS…DPNH, and DGST…DLRL. Phosphoserine is present on residues serine 175 and serine 186. Residues 199 to 512 enclose the Protein kinase domain; the sequence is IISAQNIYSF…ILKNDLKEFI (314 aa). Residues 205–213 and lysine 267 contribute to the ATP site; that span reads IYSFGFGKF. Serine 431 is modified (phosphoserine; by PLK1). Serine 561 and serine 662 each carry phosphoserine. A disordered region spans residues 700 to 720; it reads SDSLGSLNLPEPTREAKGKTS. Residues 791–797 carry the GPPX3Y motif; that stretch reads GPPSLAY. Disordered stretches follow at residues 852 to 906, 947 to 977, 992 to 1012, and 1035 to 1062; these read VSEE…MASV, PPWN…RGPE, DEPK…DKNK, and QPEQ…SSPI. 2 stretches are compositionally biased toward polar residues: residues 875 to 886 and 894 to 906; these read KQSTGEQLPSTQ and KNTN…MASV. The D-box signature appears at 889–897; sequence RESLEKNTN. The span at 992–1011 shows a compositional bias: basic and acidic residues; it reads DEPKGNTKFGKMDNSDCDKN. Polar residues predominate over residues 1038–1061; it reads QNEASQASCDTSVGTEKFYSTSSP. Residues serine 1060 and serine 1221 each carry the phosphoserine modification. Disordered regions lie at residues 1261–1282 and 1300–1418; these read THAT…QQHL and KQQQ…SLGT. Composition is skewed to polar residues over residues 1300 to 1311 and 1332 to 1344; these read KQQQVSSLASHE and TNSS…LSSR. Phosphoserine occurs at positions 1357 and 1358. Basic and acidic residues-rich tracts occupy residues 1383-1397 and 1404-1413; these read STRE…VVEQ and SIKPERRESD. Phosphoserine is present on residues serine 1412 and serine 1449.

Belongs to the protein kinase superfamily. In terms of assembly, interacts with KIF23 and RBM44. Interacts with CEP55; inhibiting interaction between CEP55 and PDCD6IP/ALIX and TSG101. In terms of processing, phosphorylated on Thr residues by CDK1 during early phases of mitosis, promoting the interaction with PLK1 and recruitment to kinetochores. Phosphorylated on Ser-431 by PLK1 during late prometaphase promotes the rapid depletion from kinetochores and its subsequent degradation by the APC/C complex. As to expression, detected in testis and spermatogonia. Not detectable in the other tissues tested.

Its subcellular location is the cytoplasm. It localises to the midbody. It is found in the chromosome. The protein localises to the centromere. The protein resides in the kinetochore. Required both for the formation of intercellular bridges during meiosis and for kinetochore-microtubule attachment during mitosis. Intercellular bridges are evolutionarily conserved structures that connect differentiating germ cells and are required for spermatogenesis and male fertility. Acts by promoting the conversion of midbodies into intercellular bridges via its interaction with CEP55: interaction with CEP55 inhibits the interaction between CEP55 and PDCD6IP/ALIX and TSG101, blocking cell abscission and leading to transform midbodies into intercellular bridges. Also plays a role during mitosis: recruited to kinetochores by PLK1 during early mitosis and regulates the maturation of the outer kinetochores and microtubule attachment. Has no protein kinase activity in vitro. This chain is Inactive serine/threonine-protein kinase TEX14 (Tex14), found in Mus musculus (Mouse).